A 391-amino-acid polypeptide reads, in one-letter code: Probable sugar efflux transporter (391 aa).

12 helical membrane-spanning segments follow: residues Val16–Leu36, Val51–Leu71, Leu82–Phe102, Met110–Val130, Gln138–Gly158, Thr170–Pro190, Pro210–Tyr230, Ile247–Gly267, Phe277–Asn297, Trp300–Leu320, Ile338–Ile358, and Leu361–Leu381.

This sequence belongs to the major facilitator superfamily. SotB (TC 2.A.1.2) family.

The protein resides in the cell inner membrane. Involved in the efflux of sugars. The physiological role may be the reduction of the intracellular concentration of toxic sugars or sugar metabolites. This is Probable sugar efflux transporter from Helicobacter pylori (strain J99 / ATCC 700824) (Campylobacter pylori J99).